Reading from the N-terminus, the 152-residue chain is Deoxyuridine 5'-triphosphate nucleotidohydrolase (152 aa).

Substrate is bound by residues 71–73, Asn-84, 88–90, and Met-98; these read RSG and LID.

It belongs to the dUTPase family. Homotrimer. Mg(2+) is required as a cofactor.

It carries out the reaction dUTP + H2O = dUMP + diphosphate + H(+). It functions in the pathway pyrimidine metabolism; dUMP biosynthesis; dUMP from dCTP (dUTP route): step 2/2. Functionally, this enzyme is involved in nucleotide metabolism: it produces dUMP, the immediate precursor of thymidine nucleotides and it decreases the intracellular concentration of dUTP so that uracil cannot be incorporated into DNA. In Escherichia coli O1:K1 / APEC, this protein is Deoxyuridine 5'-triphosphate nucleotidohydrolase.